The chain runs to 125 residues: Large ribosomal subunit protein bL12 (125 aa).

This sequence belongs to the bacterial ribosomal protein bL12 family. Homodimer. Part of the ribosomal stalk of the 50S ribosomal subunit. Forms a multimeric L10(L12)X complex, where L10 forms an elongated spine to which 2 to 4 L12 dimers bind in a sequential fashion. Binds GTP-bound translation factors.

Its function is as follows. Forms part of the ribosomal stalk which helps the ribosome interact with GTP-bound translation factors. Is thus essential for accurate translation. This Francisella tularensis subsp. holarctica (strain FTNF002-00 / FTA) protein is Large ribosomal subunit protein bL12.